The chain runs to 116 residues: Type IV narrow pilus major component PilA5 (116 aa).

Positions 1-5 (MRAKG) are cleaved as a propeptide — leader sequence. Phe-6 carries the N-methylphenylalanine modification. Residues 6–26 (FTLIELAIVIVIIGILVAIAV) form a helical membrane-spanning segment.

Post-translationally, glycosylated.

The protein resides in the cell inner membrane. The protein localises to the cell outer membrane. It is found in the periplasm. Its function is as follows. Plays an essential role in forming the main structure of the narrow T4P pili that participates in twitching motility. The polypeptide is Type IV narrow pilus major component PilA5 (pilA5) (Thermus thermophilus (strain ATCC BAA-163 / DSM 7039 / HB27)).